We begin with the raw amino-acid sequence, 222 residues long: Ribosomal RNA small subunit methyltransferase G (222 aa).

The S-adenosyl-L-methionine site is built by glycine 80, leucine 85, and arginine 149.

It belongs to the methyltransferase superfamily. RNA methyltransferase RsmG family.

It localises to the cytoplasm. Specifically methylates the N7 position of a guanine in 16S rRNA. The chain is Ribosomal RNA small subunit methyltransferase G from Treponema pallidum (strain Nichols).